Consider the following 88-residue polypeptide: Acyl-CoA-binding domain-containing protein 7 (88 aa).

In terms of domain architecture, ACB spans 3-88 (LQADFDRAAE…AKELIEKYGI (86 aa)). An acyl-CoA contacts are provided by residues Arg-15, 30 to 34 (YGLYK), Lys-56, and Tyr-75.

The protein belongs to the ACBD7 family.

Its function is as follows. Binds medium- and long-chain acyl-CoA esters. The protein is Acyl-CoA-binding domain-containing protein 7 (ACBD7) of Homo sapiens (Human).